Consider the following 176-residue polypeptide: Glutathione-regulated potassium-efflux system ancillary protein KefF (176 aa).

Residues histidine 8, 14–17 (SHAN), 65–68 (MQWY), and 105–108 (TTGG) contribute to the FMN site.

The protein belongs to the NAD(P)H dehydrogenase (quinone) family. KefF subfamily. As to quaternary structure, homodimer. Interacts with KefC. The cofactor is FMN.

It is found in the cell inner membrane. It catalyses the reaction a quinone + NADH + H(+) = a quinol + NAD(+). It carries out the reaction a quinone + NADPH + H(+) = a quinol + NADP(+). In terms of biological role, regulatory subunit of a potassium efflux system that confers protection against electrophiles. Required for full activity of KefC. Shows redox enzymatic activity, but this enzymatic activity is not required for activation of KefC. In Salmonella gallinarum (strain 287/91 / NCTC 13346), this protein is Glutathione-regulated potassium-efflux system ancillary protein KefF.